The chain runs to 337 residues: Carbonic anhydrase 14 (337 aa).

The signal sequence occupies residues 1-15 (MLFSALLLEVIWILA). At 16 to 290 (ADGGQHWTYE…AGSSYTTGEM (275 aa)) the chain is on the extracellular side. Residues 20–278 (QHWTYEGPHG…LNQRMVFASF (259 aa)) enclose the Alpha-carbonic anhydrase domain. An intrachain disulfide couples cysteine 40 to cysteine 221. Histidine 84 (proton donor/acceptor) is an active-site residue. Zn(2+) contacts are provided by histidine 109, histidine 111, and histidine 135. N-linked (GlcNAc...) asparagine glycosylation is present at asparagine 213. Position 217-218 (217-218 (TT)) interacts with substrate. The chain crosses the membrane as a helical span at residues 291–311 (LSLGVGILVGCLCLLLAVYFI). The Cytoplasmic segment spans residues 312 to 337 (ARKIRKKRLENRKSVVFTSAQATTEA). A Phosphoserine modification is found at serine 325.

Belongs to the alpha-carbonic anhydrase family. It depends on Zn(2+) as a cofactor. High expression in all parts of the central nervous system and lower expression in adult liver, heart, small intestine, colon, kidney, urinary bladder and skeletal muscle.

It is found in the membrane. The enzyme catalyses hydrogencarbonate + H(+) = CO2 + H2O. With respect to regulation, activated by histamine, L-adrenaline, L- and D-histidine, and L- and D-phenylalanine. Inhibited by coumarins, saccharin, sulfonamide derivatives such as acetazolamide (AZA) and Foscarnet (phosphonoformate trisodium salt). In terms of biological role, reversible hydration of carbon dioxide. The protein is Carbonic anhydrase 14 (CA14) of Homo sapiens (Human).